Reading from the N-terminus, the 378-residue chain is Glutamate 5-kinase 1 (378 aa).

Lys-13 is a binding site for ATP. 3 residues coordinate substrate: Ser-53, Asp-140, and Asn-152. Residue 172-173 coordinates ATP; that stretch reads SD. The PUA domain maps to 278 to 355; the sequence is AGRLTVDAGA…AEIETVLGYE (78 aa).

It belongs to the glutamate 5-kinase family.

It is found in the cytoplasm. The catalysed reaction is L-glutamate + ATP = L-glutamyl 5-phosphate + ADP. The protein operates within amino-acid biosynthesis; L-proline biosynthesis; L-glutamate 5-semialdehyde from L-glutamate: step 1/2. In terms of biological role, catalyzes the transfer of a phosphate group to glutamate to form L-glutamate 5-phosphate. The polypeptide is Glutamate 5-kinase 1 (Mesorhizobium japonicum (strain LMG 29417 / CECT 9101 / MAFF 303099) (Mesorhizobium loti (strain MAFF 303099))).